Reading from the N-terminus, the 468-residue chain is ATP synthase subunit beta (468 aa).

An ATP-binding site is contributed by 156-163 (GGAGVGKT).

This sequence belongs to the ATPase alpha/beta chains family. F-type ATPases have 2 components, CF(1) - the catalytic core - and CF(0) - the membrane proton channel. CF(1) has five subunits: alpha(3), beta(3), gamma(1), delta(1), epsilon(1). CF(0) has three main subunits: a(1), b(2) and c(9-12). The alpha and beta chains form an alternating ring which encloses part of the gamma chain. CF(1) is attached to CF(0) by a central stalk formed by the gamma and epsilon chains, while a peripheral stalk is formed by the delta and b chains.

The protein localises to the cell inner membrane. The catalysed reaction is ATP + H2O + 4 H(+)(in) = ADP + phosphate + 5 H(+)(out). Produces ATP from ADP in the presence of a proton gradient across the membrane. The catalytic sites are hosted primarily by the beta subunits. This is ATP synthase subunit beta from Sulfurimonas denitrificans (strain ATCC 33889 / DSM 1251) (Thiomicrospira denitrificans (strain ATCC 33889 / DSM 1251)).